Consider the following 282-residue polypeptide: Shikimate dehydrogenase (NADP(+)) (282 aa).

Residues 18-20 and Thr65 each bind shikimate; that span reads SRS. Lys69 acts as the Proton acceptor in catalysis. Glu81 provides a ligand contact to NADP(+). Residues Asn90 and Asp105 each coordinate shikimate. NADP(+) contacts are provided by residues 130–134, 154–159, and Met222; these read GAGGA and NRTPAR. Tyr224 is a binding site for shikimate. Residue Gly245 participates in NADP(+) binding.

This sequence belongs to the shikimate dehydrogenase family. In terms of assembly, homodimer.

The catalysed reaction is shikimate + NADP(+) = 3-dehydroshikimate + NADPH + H(+). It participates in metabolic intermediate biosynthesis; chorismate biosynthesis; chorismate from D-erythrose 4-phosphate and phosphoenolpyruvate: step 4/7. In terms of biological role, involved in the biosynthesis of the chorismate, which leads to the biosynthesis of aromatic amino acids. Catalyzes the reversible NADPH linked reduction of 3-dehydroshikimate (DHSA) to yield shikimate (SA). The polypeptide is Shikimate dehydrogenase (NADP(+)) (Acidovorax ebreus (strain TPSY) (Diaphorobacter sp. (strain TPSY))).